Reading from the N-terminus, the 62-residue chain is Large ribosomal subunit protein uL30 (62 aa).

This sequence belongs to the universal ribosomal protein uL30 family. Part of the 50S ribosomal subunit.

This Halalkalibacterium halodurans (strain ATCC BAA-125 / DSM 18197 / FERM 7344 / JCM 9153 / C-125) (Bacillus halodurans) protein is Large ribosomal subunit protein uL30.